The chain runs to 29 residues: Cytochrome b6-f complex subunit 8 (29 aa).

A helical membrane pass occupies residues 3-23 (IVSIGWAALMVVFTFSLSLVV).

It belongs to the PetN family. The 4 large subunits of the cytochrome b6-f complex are cytochrome b6, subunit IV (17 kDa polypeptide, PetD), cytochrome f and the Rieske protein, while the 4 small subunits are PetG, PetL, PetM and PetN. The complex functions as a dimer.

It is found in the plastid. Its subcellular location is the chloroplast thylakoid membrane. Component of the cytochrome b6-f complex, which mediates electron transfer between photosystem II (PSII) and photosystem I (PSI), cyclic electron flow around PSI, and state transitions. The chain is Cytochrome b6-f complex subunit 8 from Zygnema circumcarinatum (Green alga).